We begin with the raw amino-acid sequence, 208 residues long: Uracil phosphoribosyltransferase (208 aa).

5-phospho-alpha-D-ribose 1-diphosphate contacts are provided by residues R78, R103, and D130–S138. Uracil-binding positions include I193 and G198 to A200. D199 is a binding site for 5-phospho-alpha-D-ribose 1-diphosphate.

This sequence belongs to the UPRTase family. Requires Mg(2+) as cofactor.

It carries out the reaction UMP + diphosphate = 5-phospho-alpha-D-ribose 1-diphosphate + uracil. It participates in pyrimidine metabolism; UMP biosynthesis via salvage pathway; UMP from uracil: step 1/1. Allosterically activated by GTP. Functionally, catalyzes the conversion of uracil and 5-phospho-alpha-D-ribose 1-diphosphate (PRPP) to UMP and diphosphate. This chain is Uracil phosphoribosyltransferase, found in Shewanella woodyi (strain ATCC 51908 / MS32).